The following is a 149-amino-acid chain: Cytochrome c-556 (149 aa).

The signal sequence occupies residues 1 to 20; it reads MLRTVIVAGALVLTASAVMA. The heme c site is built by Met-32, Cys-137, Cys-140, and His-141.

Monomer. Binds 1 heme c group covalently per subunit.

Its function is as follows. Low-spin monoheme cytochrome c. The protein is Cytochrome c-556 of Rhodopseudomonas palustris (strain ATCC BAA-98 / CGA009).